A 222-amino-acid chain; its full sequence is Iron-sulfur cluster repair protein YtfE (222 aa).

Belongs to the RIC family. YtfE subfamily. Homodimer.

The protein resides in the cytoplasm. In terms of biological role, di-iron-containing protein involved in the repair of iron-sulfur clusters damaged by oxidative and nitrosative stress conditions. This is Iron-sulfur cluster repair protein YtfE from Musicola paradisiaca (strain Ech703) (Dickeya paradisiaca).